The chain runs to 473 residues: Photosystem II CP43 reaction center protein (473 aa).

Positions 1-14 are excised as a propeptide; it reads MKTLYSLRRFYHVE. At Thr15 the chain carries N-acetylthreonine. A Phosphothreonine modification is found at Thr15. The next 5 helical transmembrane spans lie at 69-93, 134-155, 178-200, 255-275, and 291-312; these read LFEV…PHLA, LLGP…KDRN, KALY…RKIT, KPFA…LSYS, and WFNN…ASQA. Glu367 lines the [CaMn4O5] cluster pocket. A helical membrane pass occupies residues 447-471; sequence RARAAAAGFEKGIDRDFEPVLSMTP.

The protein belongs to the PsbB/PsbC family. PsbC subfamily. PSII is composed of 1 copy each of membrane proteins PsbA, PsbB, PsbC, PsbD, PsbE, PsbF, PsbH, PsbI, PsbJ, PsbK, PsbL, PsbM, PsbT, PsbX, PsbY, PsbZ, Psb30/Ycf12, at least 3 peripheral proteins of the oxygen-evolving complex and a large number of cofactors. It forms dimeric complexes. Binds multiple chlorophylls and provides some of the ligands for the Ca-4Mn-5O cluster of the oxygen-evolving complex. It may also provide a ligand for a Cl- that is required for oxygen evolution. PSII binds additional chlorophylls, carotenoids and specific lipids. is required as a cofactor.

Its subcellular location is the plastid. The protein localises to the chloroplast thylakoid membrane. Its function is as follows. One of the components of the core complex of photosystem II (PSII). It binds chlorophyll and helps catalyze the primary light-induced photochemical processes of PSII. PSII is a light-driven water:plastoquinone oxidoreductase, using light energy to abstract electrons from H(2)O, generating O(2) and a proton gradient subsequently used for ATP formation. The protein is Photosystem II CP43 reaction center protein of Capsella bursa-pastoris (Shepherd's purse).